We begin with the raw amino-acid sequence, 235 residues long: Voltage-gated hydrogen channel 1 (235 aa).

Residues 1-62 lie on the Cytoplasmic side of the membrane; sequence MSRYLKHFTV…VMKKLFSSRR (62 aa). A helical transmembrane segment spans residues 63 to 83; that stretch reads FQIVIVFLVIVDALLVLGELL. At 84–100 the chain is on the extracellular side; it reads MDLKIIHPDKYHIAPKV. The chain crosses the membrane as a helical span at residues 101–123; it reads FHYLSLSILTIFLVEVGFKIFVY. Topologically, residues 124-131 are cytoplasmic; it reads GREFFHHK. Residues 132–152 traverse the membrane as a helical segment; that stretch reads FEVLDSIVVVVSFILDLVLLF. At 153–159 the chain is on the extracellular side; the sequence is REHEFEA. The chain crosses the membrane as a helical span at residues 160 to 180; that stretch reads VGLLILLRLWRVARIINGIIL. Over 181 to 235 the chain is Cytoplasmic; it reads SVKTRSEQQVSKLKQVNLKLATKVEQLQHSCVEKEQEIERLTRMLKQHGLLSEQT. A coiled-coil region spans residues 187–228; the sequence is EQQVSKLKQVNLKLATKVEQLQHSCVEKEQEIERLTRMLKQH.

It belongs to the hydrogen channel family. In terms of assembly, homodimer.

The protein resides in the membrane. It localises to the cell membrane. Its function is as follows. Mediates the voltage-dependent proton permeability of excitable membranes. Forms a proton-selective channel through which protons may pass in accordance with their electrochemical gradient. The chain is Voltage-gated hydrogen channel 1 (HVCN1) from Gallus gallus (Chicken).